The following is a 185-amino-acid chain: Bcl-2-modifying factor (185 aa).

The interval 1–28 (MEPPQCVEELEDDVFQSEDGEPGTQPGG) is disordered. Residues 8–21 (EELEDDVFQSEDGE) show a composition bias toward acidic residues. The segment at 67–75 (DKATQTLSP) is interaction with DLC2. The BH3 motif lies at 134 to 148 (IARKLQCIADQFHRL).

The protein belongs to the Bcl-2 family. Interacts with MCL1, BCL2, BCL2L1/BCL-Xl, BCL2A1 and BCL2L2/BCL-w. Interacts with the myosin V actin motor complex through its binding to DLC2. Widely expressed with an abundant expression in pancreas, liver kidney and hematopoietic tissues.

Functionally, may play a role in apoptosis. The polypeptide is Bcl-2-modifying factor (Bmf) (Mus musculus (Mouse)).